The sequence spans 95 residues: Envelope glycoprotein N (95 aa).

The N-terminal stretch at 1-26 (MGLMDIHNAVCSLVIGVAILIATSQA) is a signal peptide. Over 27 to 55 (TFVDWGSSITSMGDFWESTCSAVGVSIAF) the chain is Virion surface. A helical transmembrane segment spans residues 56 to 76 (SSGFSVLFYMGLVAVISALLA). Residues 77-95 (GSYHACFRLFTADMFKEEW) lie on the Intravirion side of the membrane.

It belongs to the herpesviridae glycoprotein N family. Interacts (via N-terminus) with gM (via N-terminus). The gM-gN heterodimer forms the gCII complex.

The protein localises to the virion membrane. The protein resides in the host membrane. It localises to the host Golgi apparatus. It is found in the host trans-Golgi network. Functionally, envelope glycoprotein necessary for proper maturation of gM and modulation of its membrane fusion activity. Also plays a critical role in virion morphogenesis. This Gallus gallus (Chicken) protein is Envelope glycoprotein N.